Here is a 349-residue protein sequence, read N- to C-terminus: Hydrophobic dipeptide epimerase (349 aa).

Substrate contacts are provided by residues Thr127 and 153-155 (KIK). Mg(2+) is bound by residues Asp186, Glu212, and Asp237. Substrate contacts are provided by residues Lys259 and 309 to 311 (DLD).

It belongs to the mandelate racemase/muconate lactonizing enzyme family. It depends on Mg(2+) as a cofactor.

Catalyzes the epimerization a variety of hydrophobic dipeptides. Epimerase activity is highest with L-Ala-L-Tyr, and lower with L-Ala-L-Met, L-Ala-L-Phe, L-Tyr-L-Ala, L-Tyr-L-Met and L-Tyr-L-Trp (in vitro). This Flavobacteria bacterium (strain MS024-2A) protein is Hydrophobic dipeptide epimerase.